The sequence spans 111 residues: Probable 4-amino-4-deoxy-L-arabinose-phosphoundecaprenol flippase subunit ArnE (111 aa).

At 1-35 (MIWLTLVFASLLSVAGQLCQKQATCFAAVNKRRKH) the chain is on the cytoplasmic side. A helical membrane pass occupies residues 36–56 (IVLWLGLALACLGLAMVLWLL). The EamA domain occupies 40 to 109 (LGLALACLGL…IIGGIVILGS (70 aa)). Over 57–60 (VLQN) the chain is Periplasmic. A helical transmembrane segment spans residues 61 to 81 (VPVGIAYPMLSLNFVWVTLAA). Residues 82 to 87 (VKLWHE) lie on the Cytoplasmic side of the membrane. The chain crosses the membrane as a helical span at residues 88–108 (PVSLRHWCGVAFIIGGIVILG). At 109–111 (STV) the chain is on the periplasmic side.

This sequence belongs to the ArnE family. As to quaternary structure, heterodimer of ArnE and ArnF.

It localises to the cell inner membrane. The protein operates within bacterial outer membrane biogenesis; lipopolysaccharide biosynthesis. Functionally, translocates 4-amino-4-deoxy-L-arabinose-phosphoundecaprenol (alpha-L-Ara4N-phosphoundecaprenol) from the cytoplasmic to the periplasmic side of the inner membrane. The polypeptide is Probable 4-amino-4-deoxy-L-arabinose-phosphoundecaprenol flippase subunit ArnE (Escherichia coli (strain UTI89 / UPEC)).